Reading from the N-terminus, the 261-residue chain is Pantothenate synthetase (261 aa).

29–36 (MGALHNGH) lines the ATP pocket. H36 functions as the Proton donor in the catalytic mechanism. Q60 is a (R)-pantoate binding site. Q60 serves as a coordination point for beta-alanine. Position 147 to 150 (147 to 150 (GEKD)) interacts with ATP. Q153 contributes to the (R)-pantoate binding site. Residue 184–187 (LSSR) participates in ATP binding.

This sequence belongs to the pantothenate synthetase family. In terms of assembly, homodimer.

The protein localises to the cytoplasm. It carries out the reaction (R)-pantoate + beta-alanine + ATP = (R)-pantothenate + AMP + diphosphate + H(+). It functions in the pathway cofactor biosynthesis; (R)-pantothenate biosynthesis; (R)-pantothenate from (R)-pantoate and beta-alanine: step 1/1. Its function is as follows. Catalyzes the condensation of pantoate with beta-alanine in an ATP-dependent reaction via a pantoyl-adenylate intermediate. This chain is Pantothenate synthetase, found in Francisella tularensis subsp. holarctica (strain FTNF002-00 / FTA).